Consider the following 171-residue polypeptide: Translation initiation factor IF-3 (171 aa).

Belongs to the IF-3 family. In terms of assembly, monomer.

Its subcellular location is the cytoplasm. IF-3 binds to the 30S ribosomal subunit and shifts the equilibrium between 70S ribosomes and their 50S and 30S subunits in favor of the free subunits, thus enhancing the availability of 30S subunits on which protein synthesis initiation begins. The protein is Translation initiation factor IF-3 of Thermus thermophilus (strain ATCC BAA-163 / DSM 7039 / HB27).